Consider the following 512-residue polypeptide: Ammonium transporter 2 (512 aa).

Over 1-47 (MSSVNSIPTATSTVYISVLPATATPSGGSGGNVLHEDLNKFYDYGNT) the chain is Extracellular. The helical transmembrane segment at 48–68 (SWILACTPLCLIMVPGVAFFY) threads the bilayer. Over 69–77 (SGLARRKNT) the chain is Cytoplasmic. A helical membrane pass occupies residues 78–98 (LALIMLSMLGLCVSFFQWYFW). The Extracellular segment spans residues 99-137 (GYSLAFSQTGTSGYIGNLRHFAFIRTLADYSPGSNNIPE). A helical membrane pass occupies residues 138–158 (LVFANFQGMFAAITVALFTGA). The Cytoplasmic segment spans residues 159–167 (AAERGRIGP). The chain crosses the membrane as a helical span at residues 168–188 (MLIITFVWLTVVYCPIACWIW). Residues 189–201 (NPNGWAFKFGVYD) lie on the Extracellular side of the membrane. The helical transmembrane segment at 202–222 (FAGGGPVEVGSGFAALAYTVC) threads the bilayer. The Cytoplasmic portion of the chain corresponds to 223 to 238 (LGRRSKFVEEQFRPHS). The helical transmembrane segment at 239–259 (VLNVVLGTSLLWFGWLGFNGG) threads the bilayer. The Extracellular segment spans residues 260–267 (SAYGSNLR). The helical transmembrane segment at 268–288 (AAMAITNTNLAGAVAGLVWVI) threads the bilayer. At 289 to 300 (YDYIFRTRKWST) the chain is on the cytoplasmic side. A helical transmembrane segment spans residues 301-321 (IGFCSGVVAGLVAATPCAGFV). Residue serine 322 is a topological domain, extracellular. Residues 323–343 (PHASLAIGAITGLCCNWAIKL) form a helical membrane-spanning segment. Topologically, residues 344-354 (KSHMRIDDAMD) are cytoplasmic. A helical transmembrane segment spans residues 355–375 (IFAIHGVAGFVGTFLNGLFAV). Residues 376 to 406 (DYIAAMDGIYVGENKIRGGWFDHHWRQLGLQ) lie on the Extracellular side of the membrane. A helical membrane pass occupies residues 407-427 (MAYICAVGAYDFVVTFIILFI). Over 428–512 (TDKIPYLQLR…TNPLELGLTI (85 aa)) the chain is Cytoplasmic.

The protein belongs to the ammonia transporter channel (TC 1.A.11.2) family.

Its subcellular location is the membrane. Transporter for ammonium to use as a nitrogen source. The polypeptide is Ammonium transporter 2 (amt2) (Schizosaccharomyces pombe (strain 972 / ATCC 24843) (Fission yeast)).